The chain runs to 264 residues: S-adenosylmethionine decarboxylase proenzyme (264 aa).

Ser-112 functions as the Schiff-base intermediate with substrate; via pyruvic acid in the catalytic mechanism. Ser-112 is modified (pyruvic acid (Ser); by autocatalysis). His-117 (proton acceptor; for processing activity) is an active-site residue. Cys-140 acts as the Proton donor; for catalytic activity in catalysis.

This sequence belongs to the prokaryotic AdoMetDC family. Type 2 subfamily. Heterooctamer of four alpha and four beta chains arranged as a tetramer of alpha/beta heterodimers. Requires pyruvate as cofactor. In terms of processing, is synthesized initially as an inactive proenzyme. Formation of the active enzyme involves a self-maturation process in which the active site pyruvoyl group is generated from an internal serine residue via an autocatalytic post-translational modification. Two non-identical subunits are generated from the proenzyme in this reaction, and the pyruvate is formed at the N-terminus of the alpha chain, which is derived from the carboxyl end of the proenzyme. The post-translation cleavage follows an unusual pathway, termed non-hydrolytic serinolysis, in which the side chain hydroxyl group of the serine supplies its oxygen atom to form the C-terminus of the beta chain, while the remainder of the serine residue undergoes an oxidative deamination to produce ammonia and the pyruvoyl group blocking the N-terminus of the alpha chain.

The catalysed reaction is S-adenosyl-L-methionine + H(+) = S-adenosyl 3-(methylsulfanyl)propylamine + CO2. The protein operates within amine and polyamine biosynthesis; S-adenosylmethioninamine biosynthesis; S-adenosylmethioninamine from S-adenosyl-L-methionine: step 1/1. In terms of biological role, catalyzes the decarboxylation of S-adenosylmethionine to S-adenosylmethioninamine (dcAdoMet), the propylamine donor required for the synthesis of the polyamines spermine and spermidine from the diamine putrescine. This chain is S-adenosylmethionine decarboxylase proenzyme, found in Photorhabdus laumondii subsp. laumondii (strain DSM 15139 / CIP 105565 / TT01) (Photorhabdus luminescens subsp. laumondii).